Consider the following 117-residue polypeptide: MDKRSSRLRRAKRARAKISELGANRLVIFRTPRHIYAQLIAPTGSEVIASASTLDKEVSAQIEKTGNVAAATAVGKAIAERAVAKGITKIAFDRSGFLYHGRVKALAEAAREAGLQF.

The protein belongs to the universal ribosomal protein uL18 family. Part of the 50S ribosomal subunit; part of the 5S rRNA/L5/L18/L25 subcomplex. Contacts the 5S and 23S rRNAs.

Its function is as follows. This is one of the proteins that bind and probably mediate the attachment of the 5S RNA into the large ribosomal subunit, where it forms part of the central protuberance. The sequence is that of Large ribosomal subunit protein uL18 from Colwellia psychrerythraea (strain 34H / ATCC BAA-681) (Vibrio psychroerythus).